Here is a 217-residue protein sequence, read N- to C-terminus: Probable glutathione S-transferase DHAR4 (217 aa).

The glutathione site is built by K8 and D19. Positions 8 and 19 each coordinate L-ascorbate. The region spanning 10 to 85 (ASGAPDVLGD…DLIVGIIEEK (76 aa)) is the GST N-terminal domain. The Nucleophile role is filled by C20. The short motif at 20 to 25 (CPFGQR) is the Glutathione-binding element. Glutathione is bound by residues K47, S75, H164, and W211. Residues 86–217 (YPEPSLVTFP…IASWAPKLDV (132 aa)) form the GST C-terminal domain. An L-ascorbate-binding site is contributed by K214.

Belongs to the GST superfamily. DHAR family. Monomer.

Its subcellular location is the cytoplasm. It localises to the cytosol. The catalysed reaction is RX + glutathione = an S-substituted glutathione + a halide anion + H(+). It catalyses the reaction L-dehydroascorbate + 2 glutathione = glutathione disulfide + L-ascorbate. Its function is as follows. Exhibits glutathione-dependent thiol transferase and dehydroascorbate (DHA) reductase activities. The protein is Probable glutathione S-transferase DHAR4 (DHAR4) of Arabidopsis thaliana (Mouse-ear cress).